Here is a 423-residue protein sequence, read N- to C-terminus: F-box/LRR-repeat protein 2 (423 aa).

Residues 9-55 form the F-box domain; that stretch reads GLINKKLPKELLLRIFSFLDIVTLCRCAQISKAWNILALDGSNWQRI. LRR repeat units lie at residues 61-87, 88-113, 114-139, 140-165, 166-191, 192-217, 218-243, 244-269, 270-295, 296-321, 322-350, 351-375, and 376-401; these read QTDV…SLRG, CIGV…NLNG, CTKI…DLTS, CVSI…NLSW, CDQI…LLRG, CTQL…NLQS, CSRI…CLSG, CSNL…EAAR, CSHL…DLEE, CILI…SLSH, CELI…ELDN, CLLI…ELYD, and CQQV…AYFA. Positions 80-90 are interaction with Calmodulin; sequence LRKLSLRGCIG. Residue Lys-201 forms a Glycyl lysine isopeptide (Lys-Gly) (interchain with G-Cter in ubiquitin) linkage. Phosphothreonine is present on Thr-404. Residue Cys-420 is the site of S-geranylgeranyl cysteine attachment. Residues 420–423 carry the CAAX motif motif; that stretch reads CVIL.

As to quaternary structure, part of the SCF (SKP1-CUL1-F-box) E3 ubiquitin-protein ligase complex SCF(FBXL2) composed of CUL1, SKP1, RBX1 and FBXL2. Interacts with calmodulin; may antagonize substrate ubiquitination by SCF(FBXL2). May interact with PIK3R1. Interacts with PTPN13. In terms of assembly, (Microbial infection) Interacts with hepatitis C virus non-structural protein 5A (NS5A) and less efficiently, with hepatitis C virus non-structural protein 5B (NS5B); a reaction crucial for hepatitis C virus RNA replication. Phosphorylated by GSK-beta (GSK3B), promoting recognition by FBXO3, leading to its ubiquitination by the SCF(FBXO3) complex. Post-translationally, ubiquitinated at Lys-201 by the SCF(FBXO3) complex in response to lipopolysaccharide (LPS), leading to its degradation by the proteasome. Expressed in brain, heart, kidney, liver, lung, pancreas and placenta.

It is found in the membrane. It functions in the pathway protein modification; protein ubiquitination. Calcium-activated substrate recognition component of the SCF (SKP1-cullin-F-box protein) E3 ubiquitin-protein ligase complex, SCF(FBXL2), which mediates the ubiquitination and subsequent proteasomal degradation of target proteins. Unlike many F-box proteins, FBXL2 does not seem to target phosphodegron within its substrates but rather calmodulin-binding motifs and is thereby antagonized by calmodulin. This is the case for the cyclins CCND2 and CCND3 which polyubiquitination and subsequent degradation are inhibited by calmodulin. Through CCND2 and CCND3 degradation induces cell-cycle arrest in G(0). SCF(FBXL2) also mediates PIK3R2 ubiquitination and proteasomal degradation thereby regulating phosphatidylinositol 3-kinase signaling and autophagy. PCYT1A monoubiquitination by SCF(FBXL2) and subsequent degradation regulates synthesis of phosphatidylcholine, which is utilized for formation of membranes and of pulmonary surfactant. The SCF(FBXL2) complex acts as a regulator of inflammation by mediating ubiquitination and degradation of TRAF proteins (TRAF1, TRAF2, TRAF3, TRAF4, TRAF5 and TRAF6). The SCF(FBXL2) complex acts as a negative regulator of the NLRP3 inflammasome by mediating ubiquitination and degradation of NLRP3. The chain is F-box/LRR-repeat protein 2 from Homo sapiens (Human).